The following is a 793-amino-acid chain: Ankyrin repeat domain-containing protein SOWAHB (793 aa).

Disordered regions lie at residues 83–185 (EEGL…QARA), 219–290 (ATAE…ELLT), 337–360 (QLPLEPGSTEPNSEPPDPCLSSHS), and 396–543 (DFVD…SPRV). Composition is skewed to low complexity over residues 96-108 (APSAGGAAPCSPR), 134-144 (AGAAARAADAA), and 175-185 (AAAAAGAQARA). Serine 106 bears the Phosphoserine mark. The segment covering 220–244 (TAEEKPARALPAQDDRGASREREEG) has biased composition (basic and acidic residues). The span at 246–273 (LAEPAPVPAVAHSPPATVEAATSRASPP) shows a compositional bias: low complexity. At serine 271 the chain carries Phosphoserine. Residues 396–406 (DFVDQESDGSE) show a composition bias toward acidic residues. 2 stretches are compositionally biased toward low complexity: residues 407 to 417 (ESSSGPKDSPG) and 498 to 508 (RSSLAGRAKLS). Basic residues predominate over residues 521 to 533 (KRSRRPPRSRKPS). 2 ANK repeats span residues 630–659 (TGYTALHWIAKHGDLRALQDLVSGAKKAGI) and 669–699 (CGYTPLHLAAIHGHQGVIKLLVQRLASRVNV). Serine 761 bears the Phosphoserine mark.

It belongs to the SOWAH family.

The protein is Ankyrin repeat domain-containing protein SOWAHB (SOWAHB) of Homo sapiens (Human).